Reading from the N-terminus, the 538-residue chain is MLLPLACLHGRVAQCLTSLLLLAEPLPRPRRGARARGAASTGAEAAPAAPPAKMAAELYAPASAAAADLANSNAGAAVGRKAGPRSPPSAPAPAPPPPAPAPPTLGNNHQESPGWRCCRPTLRERNALMFNNELMADVHFVVGPPGATRTVPAHKYVLAVGSSVFYAMFYGDLAEVKSEIHIPDVEPAAFLILLKYMYSDEIDLEADTVLATLYAAKKYIVPALAKACVNFLETSLEAKNACVLLSQSRLFEEPELTQRCWEVIDAQAEMALRSEGFCEIDRQTLEIIVTREALNTKEAVVFEAVLNWAEAECKRQGLPITPRNKRHVLGRALYLVRIPTMTLEEFANGAAQSDILTLEETHSIFLWYTATNKPRLDFPLTKRKGLAPQRCHRFQSSAYRSNQWRYRGRCDSIQFAVDRRVFIAGLGLYGSSSGKAEYSVKIELKRLGVVLAQNLTKFMSDGSSNTFPVWFEHPVQVEQDTFYTASAVLDGSELSYFGQEGMTEVQCGKVAFQFQCSSDSTNGTGVQGGQIPELIFYA.

Positions M1 to T17 are cleaved as a signal peptide. 2 disordered regions span residues P29–K53 and A76–W115. Residues A35 to K53 are compositionally biased toward low complexity. Over residues R85–P103 the composition is skewed to pro residues. The 71-residue stretch at A136–A206 folds into the BTB domain.

As to expression, expressed in lens.

The protein localises to the cytoplasm. Adapter protein for the cul3 E3 ubiquitin-protein ligase complex. Involved in late neuronal development and muscle formation. The chain is BTB/POZ domain-containing protein 6 from Homo sapiens (Human).